The chain runs to 224 residues: UPF0758 protein PBPRA0202 (224 aa).

The region spanning 102–224 (VLTSPQHTRH…IVSFSEQGWL (123 aa)) is the MPN domain. Zn(2+) is bound by residues H173, H175, and D186. A JAMM motif motif is present at residues 173-186 (HNHPSGVAEPSQSD).

It belongs to the UPF0758 family.

This chain is UPF0758 protein PBPRA0202, found in Photobacterium profundum (strain SS9).